Here is a 687-residue protein sequence, read N- to C-terminus: UvrABC system protein B (687 aa).

Positions glutamate 26 to proline 414 constitute a Helicase ATP-binding domain. Glycine 39–threonine 46 serves as a coordination point for ATP. Residues tyrosine 92–valine 115 carry the Beta-hairpin motif. The Helicase C-terminal domain occupies glutamine 430–isoleucine 596. The 36-residue stretch at alanine 630–tryptophan 665 folds into the UVR domain.

The protein belongs to the UvrB family. In terms of assembly, forms a heterotetramer with UvrA during the search for lesions. Interacts with UvrC in an incision complex.

Its subcellular location is the cytoplasm. Functionally, the UvrABC repair system catalyzes the recognition and processing of DNA lesions. A damage recognition complex composed of 2 UvrA and 2 UvrB subunits scans DNA for abnormalities. Upon binding of the UvrA(2)B(2) complex to a putative damaged site, the DNA wraps around one UvrB monomer. DNA wrap is dependent on ATP binding by UvrB and probably causes local melting of the DNA helix, facilitating insertion of UvrB beta-hairpin between the DNA strands. Then UvrB probes one DNA strand for the presence of a lesion. If a lesion is found the UvrA subunits dissociate and the UvrB-DNA preincision complex is formed. This complex is subsequently bound by UvrC and the second UvrB is released. If no lesion is found, the DNA wraps around the other UvrB subunit that will check the other stand for damage. In Nitrosococcus oceani (strain ATCC 19707 / BCRC 17464 / JCM 30415 / NCIMB 11848 / C-107), this protein is UvrABC system protein B.